The primary structure comprises 224 residues: Cytochrome c biogenesis ATP-binding export protein CcmA (224 aa).

Positions 1–220 (MQNAEAAPAL…EYAHAEVVGA (220 aa)) constitute an ABC transporter domain. Position 40–47 (40–47 (GANGSGKT)) interacts with ATP.

This sequence belongs to the ABC transporter superfamily. CcmA exporter (TC 3.A.1.107) family. As to quaternary structure, the complex is composed of two ATP-binding proteins (CcmA) and two transmembrane proteins (CcmB).

It is found in the cell inner membrane. The catalysed reaction is heme b(in) + ATP + H2O = heme b(out) + ADP + phosphate + H(+). In terms of biological role, part of the ABC transporter complex CcmAB involved in the biogenesis of c-type cytochromes; once thought to export heme, this seems not to be the case, but its exact role is uncertain. Responsible for energy coupling to the transport system. The chain is Cytochrome c biogenesis ATP-binding export protein CcmA from Bordetella parapertussis (strain 12822 / ATCC BAA-587 / NCTC 13253).